We begin with the raw amino-acid sequence, 280 residues long: Putative pyruvate, phosphate dikinase regulatory protein (280 aa).

158–165 lines the ADP pocket; the sequence is GVSRTSKT.

It belongs to the pyruvate, phosphate/water dikinase regulatory protein family. PDRP subfamily.

It catalyses the reaction N(tele)-phospho-L-histidyl/L-threonyl-[pyruvate, phosphate dikinase] + ADP = N(tele)-phospho-L-histidyl/O-phospho-L-threonyl-[pyruvate, phosphate dikinase] + AMP + H(+). The enzyme catalyses N(tele)-phospho-L-histidyl/O-phospho-L-threonyl-[pyruvate, phosphate dikinase] + phosphate + H(+) = N(tele)-phospho-L-histidyl/L-threonyl-[pyruvate, phosphate dikinase] + diphosphate. Functionally, bifunctional serine/threonine kinase and phosphorylase involved in the regulation of the pyruvate, phosphate dikinase (PPDK) by catalyzing its phosphorylation/dephosphorylation. This is Putative pyruvate, phosphate dikinase regulatory protein from Lactobacillus johnsonii (strain CNCM I-12250 / La1 / NCC 533).